The primary structure comprises 338 residues: Methionine import ATP-binding protein MetN 1 (338 aa).

An ABC transporter domain is found at I2 to I241. Position 38–45 (G38–S45) interacts with ATP.

Belongs to the ABC transporter superfamily. Methionine importer (TC 3.A.1.24) family. The complex is composed of two ATP-binding proteins (MetN), two transmembrane proteins (MetI) and a solute-binding protein (MetQ).

It is found in the cell membrane. It carries out the reaction L-methionine(out) + ATP + H2O = L-methionine(in) + ADP + phosphate + H(+). The catalysed reaction is D-methionine(out) + ATP + H2O = D-methionine(in) + ADP + phosphate + H(+). Functionally, part of the ABC transporter complex MetNIQ involved in methionine import. Responsible for energy coupling to the transport system. The protein is Methionine import ATP-binding protein MetN 1 of Oceanobacillus iheyensis (strain DSM 14371 / CIP 107618 / JCM 11309 / KCTC 3954 / HTE831).